Reading from the N-terminus, the 132-residue chain is Small ribosomal subunit protein uS11 (132 aa).

Belongs to the universal ribosomal protein uS11 family. In terms of assembly, part of the 30S ribosomal subunit. Interacts with proteins S7 and S18. Binds to IF-3.

Located on the platform of the 30S subunit, it bridges several disparate RNA helices of the 16S rRNA. Forms part of the Shine-Dalgarno cleft in the 70S ribosome. The sequence is that of Small ribosomal subunit protein uS11 from Chlamydia felis (strain Fe/C-56) (Chlamydophila felis).